Consider the following 262-residue polypeptide: Acyl-[acyl-carrier-protein]--UDP-N-acetylglucosamine O-acyltransferase (262 aa).

This sequence belongs to the transferase hexapeptide repeat family. LpxA subfamily. Homotrimer.

The protein resides in the cytoplasm. It catalyses the reaction a (3R)-hydroxyacyl-[ACP] + UDP-N-acetyl-alpha-D-glucosamine = a UDP-3-O-[(3R)-3-hydroxyacyl]-N-acetyl-alpha-D-glucosamine + holo-[ACP]. It participates in glycolipid biosynthesis; lipid IV(A) biosynthesis; lipid IV(A) from (3R)-3-hydroxytetradecanoyl-[acyl-carrier-protein] and UDP-N-acetyl-alpha-D-glucosamine: step 1/6. Its function is as follows. Involved in the biosynthesis of lipid A, a phosphorylated glycolipid that anchors the lipopolysaccharide to the outer membrane of the cell. The chain is Acyl-[acyl-carrier-protein]--UDP-N-acetylglucosamine O-acyltransferase from Burkholderia mallei (strain NCTC 10247).